The chain runs to 28 residues: Potassium channel toxin alpha-KTx 9.7 (28 aa).

Cystine bridges form between cysteine 3–cysteine 19, cysteine 6–cysteine 24, and cysteine 10–cysteine 26.

Expressed by the venom gland.

It localises to the secreted. Calcium channel activator. Rapidly and reversibly activates ryanodine receptor 1 (RYR1). This Hottentotta judaicus (Black scorpion) protein is Potassium channel toxin alpha-KTx 9.7.